Consider the following 152-residue polypeptide: Transcriptional regulator MraZ (152 aa).

SpoVT-AbrB domains follow at residues 5 to 52 (ATMV…TLPA) and 81 to 124 (ASEC…DEQT).

This sequence belongs to the MraZ family. As to quaternary structure, forms oligomers.

The protein localises to the cytoplasm. It localises to the nucleoid. In terms of biological role, negatively regulates its own expression and that of the subsequent genes in the proximal part of the division and cell wall (dcw) gene cluster. Acts by binding directly to DNA. May also regulate the expression of genes outside the dcw cluster. In Yersinia enterocolitica serotype O:8 / biotype 1B (strain NCTC 13174 / 8081), this protein is Transcriptional regulator MraZ.